Reading from the N-terminus, the 127-residue chain is Lysozyme C (127 aa).

The C-type lysozyme domain maps to 1-127; it reads KDIPRCELVK…KDLSSYVRGC (127 aa). 4 disulfide bridges follow: cysteine 6-cysteine 127, cysteine 30-cysteine 115, cysteine 64-cysteine 80, and cysteine 76-cysteine 94. Residues glutamate 35 and aspartate 52 contribute to the active site. Positions 82, 85, 87, 90, and 91 each coordinate Ca(2+).

Belongs to the glycosyl hydrolase 22 family. As to quaternary structure, monomer. Ca(2+) serves as cofactor.

Its subcellular location is the secreted. The catalysed reaction is Hydrolysis of (1-&gt;4)-beta-linkages between N-acetylmuramic acid and N-acetyl-D-glucosamine residues in a peptidoglycan and between N-acetyl-D-glucosamine residues in chitodextrins.. Functionally, lysozymes have primarily a bacteriolytic function; those in tissues and body fluids are associated with the monocyte-macrophage system and enhance the activity of immunoagents. This Columba livia (Rock dove) protein is Lysozyme C (LYZ).